The chain runs to 450 residues: Tubulin alpha-6 chain (450 aa).

7 residues coordinate GTP: Q11, E71, G144, T145, T179, N206, and N228. E71 is a Mg(2+) binding site. The active site involves E254. Residue T349 is modified to Phosphothreonine. The tract at residues 430–450 is disordered; the sequence is KDYEEVGAEGGDDEDDEGEEY. A compositionally biased stretch (acidic residues) spans 431-450; sequence DYEEVGAEGGDDEDDEGEEY.

Belongs to the tubulin family. In terms of assembly, dimer of alpha and beta chains. A typical microtubule is a hollow water-filled tube with an outer diameter of 25 nm and an inner diameter of 15 nM. Alpha-beta heterodimers associate head-to-tail to form protofilaments running lengthwise along the microtubule wall with the beta-tubulin subunit facing the microtubule plus end conferring a structural polarity. Microtubules usually have 13 protofilaments but different protofilament numbers can be found in some organisms and specialized cells. Interacts with TFCB. The cofactor is Mg(2+). Post-translationally, undergoes a tyrosination/detyrosination cycle, the cyclic removal and re-addition of a C-terminal tyrosine residue by the enzymes tubulin tyrosine carboxypeptidase (TTCP) and tubulin tyrosine ligase (TTL), respectively. Acetylation of alpha chains at Lys-40 stabilizes microtubules and affects affinity and processivity of microtubule motors. This modification has a role in multiple cellular functions, ranging from cell motility, cell cycle progression or cell differentiation to intracellular trafficking and signaling.

It localises to the cytoplasm. Its subcellular location is the cytoskeleton. It catalyses the reaction GTP + H2O = GDP + phosphate + H(+). Tubulin is the major constituent of microtubules, a cylinder consisting of laterally associated linear protofilaments composed of alpha- and beta-tubulin heterodimers. Microtubules grow by the addition of GTP-tubulin dimers to the microtubule end, where a stabilizing cap forms. Below the cap, tubulin dimers are in GDP-bound state, owing to GTPase activity of alpha-tubulin. The chain is Tubulin alpha-6 chain (TUBA6) from Arabidopsis thaliana (Mouse-ear cress).